A 204-amino-acid chain; its full sequence is Octanoyltransferase (204 aa).

In terms of domain architecture, BPL/LPL catalytic spans 27-204; it reads KNTKDELWIV…LINYVSRNRH (178 aa). Residues 66–73, 133–135, and 146–148 each bind substrate; these read RGGQVTYH, ALG, and GLS. Cysteine 164 serves as the catalytic Acyl-thioester intermediate.

It belongs to the LipB family.

Its subcellular location is the cytoplasm. The catalysed reaction is octanoyl-[ACP] + L-lysyl-[protein] = N(6)-octanoyl-L-lysyl-[protein] + holo-[ACP] + H(+). Its pathway is protein modification; protein lipoylation via endogenous pathway; protein N(6)-(lipoyl)lysine from octanoyl-[acyl-carrier-protein]: step 1/2. In terms of biological role, catalyzes the transfer of endogenously produced octanoic acid from octanoyl-acyl-carrier-protein onto the lipoyl domains of lipoate-dependent enzymes. Lipoyl-ACP can also act as a substrate although octanoyl-ACP is likely to be the physiological substrate. In Vesicomyosocius okutanii subsp. Calyptogena okutanii (strain HA), this protein is Octanoyltransferase.